Consider the following 177-residue polypeptide: NADH-quinone oxidoreductase subunit B (177 aa).

[4Fe-4S] cluster-binding residues include cysteine 56, cysteine 57, cysteine 121, and cysteine 151.

It belongs to the complex I 20 kDa subunit family. NDH-1 is composed of 14 different subunits. Subunits NuoB, C, D, E, F, and G constitute the peripheral sector of the complex. [4Fe-4S] cluster is required as a cofactor.

The protein resides in the cell inner membrane. The enzyme catalyses a quinone + NADH + 5 H(+)(in) = a quinol + NAD(+) + 4 H(+)(out). Functionally, NDH-1 shuttles electrons from NADH, via FMN and iron-sulfur (Fe-S) centers, to quinones in the respiratory chain. Couples the redox reaction to proton translocation (for every two electrons transferred, four hydrogen ions are translocated across the cytoplasmic membrane), and thus conserves the redox energy in a proton gradient. In Roseobacter denitrificans (strain ATCC 33942 / OCh 114) (Erythrobacter sp. (strain OCh 114)), this protein is NADH-quinone oxidoreductase subunit B.